The primary structure comprises 207 residues: Vascular endothelial growth factor B (207 aa).

The signal sequence occupies residues 1–21; that stretch reads MSPLLRRLLLVALLQLARTQA. Disulfide bonds link C47–C89, C78–C122, and C82–C124. Positions 129–139 are enriched in basic and acidic residues; it reads KESAVKPDRVA. The segment at 129 to 178 is disordered; sequence KESAVKPDRVAIPHHRPQPRSVPGWDSTPGASSPADIIHPTPAPGSSARL.

Belongs to the PDGF/VEGF growth factor family. As to quaternary structure, homodimer; disulfide-linked. Can also form heterodimer with VEGF. VEGF-B186 is O-glycosylated. In terms of tissue distribution, abundantly expressed in heart, brain, kidney and skeletal muscle.

The protein resides in the secreted. Growth factor for endothelial cells. VEGF-B167 binds heparin and neuropilin-1 whereas the binding to neuropilin-1 of VEGF-B186 is regulated by proteolysis. VEGF-B seems to be required for normal heart function in adult but is not required for proper development of the cardiovascular system either during development or for angiogenesis in adults. The protein is Vascular endothelial growth factor B (Vegfb) of Mus musculus (Mouse).